We begin with the raw amino-acid sequence, 234 residues long: Triosephosphate isomerase (234 aa).

8–10 (NFK) lines the substrate pocket. His-90 functions as the Electrophile in the catalytic mechanism. Glu-159 acts as the Proton acceptor in catalysis. Residues Gly-165 and Ser-197 each contribute to the substrate site.

This sequence belongs to the triosephosphate isomerase family. In terms of assembly, homodimer.

Its subcellular location is the cytoplasm. It catalyses the reaction D-glyceraldehyde 3-phosphate = dihydroxyacetone phosphate. It participates in carbohydrate biosynthesis; gluconeogenesis. It functions in the pathway carbohydrate degradation; glycolysis; D-glyceraldehyde 3-phosphate from glycerone phosphate: step 1/1. Functionally, involved in the gluconeogenesis. Catalyzes stereospecifically the conversion of dihydroxyacetone phosphate (DHAP) to D-glyceraldehyde-3-phosphate (G3P). This is Triosephosphate isomerase from Helicobacter pylori (strain P12).